The primary structure comprises 693 residues: Elongation factor G (693 aa).

In terms of domain architecture, tr-type G spans 7 to 282; that stretch reads EKIRNIGITA…SVIDYLPAPT (276 aa). Residues 16–23, 80–84, and 134–137 contribute to the GTP site; these read AHIDAGKT, DTPGH, and NKLD.

Belongs to the TRAFAC class translation factor GTPase superfamily. Classic translation factor GTPase family. EF-G/EF-2 subfamily.

The protein localises to the cytoplasm. Functionally, catalyzes the GTP-dependent ribosomal translocation step during translation elongation. During this step, the ribosome changes from the pre-translocational (PRE) to the post-translocational (POST) state as the newly formed A-site-bound peptidyl-tRNA and P-site-bound deacylated tRNA move to the P and E sites, respectively. Catalyzes the coordinated movement of the two tRNA molecules, the mRNA and conformational changes in the ribosome. The protein is Elongation factor G of Granulibacter bethesdensis (strain ATCC BAA-1260 / CGDNIH1).